A 249-amino-acid chain; its full sequence is Indole-3-glycerol phosphate synthase (249 aa).

Belongs to the TrpC family.

It catalyses the reaction 1-(2-carboxyphenylamino)-1-deoxy-D-ribulose 5-phosphate + H(+) = (1S,2R)-1-C-(indol-3-yl)glycerol 3-phosphate + CO2 + H2O. It functions in the pathway amino-acid biosynthesis; L-tryptophan biosynthesis; L-tryptophan from chorismate: step 4/5. This Pyrobaculum arsenaticum (strain DSM 13514 / JCM 11321 / PZ6) protein is Indole-3-glycerol phosphate synthase.